Reading from the N-terminus, the 615-residue chain is MFS-type transporter 1 (615 aa).

Residues 1–85 are disordered; that stretch reads MTALAAVPDL…GNNVSPHGRH (85 aa). Over residues 16–53 the composition is skewed to polar residues; the sequence is PSTTTVHSPNYSGSPADISSSPTTRAVSRNTARQTASA. Residue asparagine 25 is glycosylated (N-linked (GlcNAc...) asparagine). 6 helical membrane passes run 94 to 114, 138 to 158, 162 to 182, 192 to 212, 222 to 242, and 251 to 271; these read CLVIATLSGVSFLNTMGSGIL, VYSLAAGCTLLVFGAVGHIIG, VWITGACLYAAFTLGVGRSAT, VLGVSIAMCLPTAVSLTTNGF, FAFQGMGQPLGYSTGLILGGI, and FGFYISGGINAVLAICALVVL. Asparagine 302 carries an N-linked (GlcNAc...) asparagine glycan. 8 helical membrane-spanning segments follow: residues 320-340, 351-371, 397-417, 432-452, 455-475, 488-508, 522-542, and 585-605; these read WTGTLAISASMGFLSYVFSVV, QNIALLVAAALLLPTFTLWVG, AAVFFTWAVFNAFQYFSALYF, FLPMVLVGAATNIVTGYLVET, VRWLVVVSAIFSLFSPLIMAL, FAMLLSPLHPDVLFTVSNLII, AVFNAVSQVGNSVGLGLTAVV, and AAFWLMFGAAALVTVITFLGL.

This sequence belongs to the major facilitator superfamily. EmrB family.

It localises to the membrane. MFS-type transporter; part of the gene cluster that mediates the biosynthesis of pyriculol and pyriculariol, two heptaketides that induce lesion formation upon application on rice leaves but are dispensable for pathogenicity. With the ABC transporter ABC7, is most likely responsible for pyriculol and pyriculariol secretion and thereby may contribute to intrinsic resistance. In Pyricularia oryzae (strain 70-15 / ATCC MYA-4617 / FGSC 8958) (Rice blast fungus), this protein is MFS-type transporter 1.